Here is a 359-residue protein sequence, read N- to C-terminus: Squamosa promoter-binding-like protein 13A (359 aa).

Positions 75 to 94 (AKPEGSRSSSSKRTRGNGVG) are disordered. The SBP-type zinc finger occupies 98–175 (MPICLVDGCD…DGHNRRRRKP (78 aa)). Residues Cys-101, Cys-106, Cys-123, His-126, Cys-142, Cys-145, His-149, and Cys-161 each coordinate Zn(2+). Residues 158-174 (KRSCRKRLDGHNRRRRK) carry the Bipartite nuclear localization signal motif.

Requires Zn(2+) as cofactor.

The protein resides in the nucleus. Functionally, trans-acting factor that binds specifically to the consensus nucleotide sequence 5'-TNCGTACAA-3'. The protein is Squamosa promoter-binding-like protein 13A (SPL13A) of Arabidopsis thaliana (Mouse-ear cress).